The sequence spans 466 residues: Chromosomal replication initiator protein DnaA (466 aa).

Residues 1–86 form a domain I, interacts with DnaA modulators region; the sequence is MSLSLWQQCL…EVGTKPVTQT (86 aa). Positions 86 to 129 are domain II; that stretch reads TLKTPVHNVVAPTQTTTAQPQRVAPAARSGWDNVPAPAEPTYRS. The tract at residues 130 to 346 is domain III, AAA+ region; that stretch reads NVNVKHTFDN…GALNRVIANA (217 aa). Residues G174, G176, K177, and T178 each contribute to the ATP site. Residues 347–466 form a domain IV, binds dsDNA region; sequence NFTGRAITID…FSNLIRTLSS (120 aa).

This sequence belongs to the DnaA family. In terms of assembly, oligomerizes as a right-handed, spiral filament on DNA at oriC.

The protein localises to the cytoplasm. Plays an essential role in the initiation and regulation of chromosomal replication. ATP-DnaA binds to the origin of replication (oriC) to initiate formation of the DNA replication initiation complex once per cell cycle. Binds the DnaA box (a 9 base pair repeat at the origin) and separates the double-stranded (ds)DNA. Forms a right-handed helical filament on oriC DNA; dsDNA binds to the exterior of the filament while single-stranded (ss)DNA is stabiized in the filament's interior. The ATP-DnaA-oriC complex binds and stabilizes one strand of the AT-rich DNA unwinding element (DUE), permitting loading of DNA polymerase. After initiation quickly degrades to an ADP-DnaA complex that is not apt for DNA replication. Binds acidic phospholipids. The polypeptide is Chromosomal replication initiator protein DnaA (Salmonella gallinarum (strain 287/91 / NCTC 13346)).